A 133-amino-acid chain; its full sequence is MTLNLRIMAPNRIVWNSQTEQIILSTNSGQIGVLKDHTPLLTALDIGVIKIRIDSKWTTMALMGGFAMIDSNQVTILVNEAEEGNQIDLKNAQENFQLTQQSLLQAKSKKQIIEAKLAFKRAKARLEAISMIS.

The protein belongs to the ATPase epsilon chain family. As to quaternary structure, F-type ATPases have 2 components, CF(1) - the catalytic core - and CF(0) - the membrane proton channel. CF(1) has five subunits: alpha(3), beta(3), gamma(1), delta(1), epsilon(1). CF(0) has three main subunits: a, b and c.

It localises to the plastid. Its subcellular location is the chloroplast thylakoid membrane. Produces ATP from ADP in the presence of a proton gradient across the membrane. The sequence is that of ATP synthase epsilon chain, chloroplastic from Chara vulgaris (Common stonewort).